A 90-amino-acid chain; its full sequence is MKAWKVEPYEISKAMELIYKYLLLDKKDFSLEEFYKLTIYAIKWKLEQAQFPLYLESTKKSHQNVIPQPFKIKGNVLYKTVIKNSGDFEE.

This is an uncharacterized protein from Bacillus subtilis (strain 168).